Consider the following 952-residue polypeptide: uncharacterized protein (952 aa).

Positions 1 to 141 (MASLLARHTK…PWIADYLIRR (141 aa)) constitute a CheB-type methylesterase domain. The 273-residue stretch at 168–440 (VGQFDGLEPA…SARHRIWQAL (273 aa)) folds into the CheR-type methyltransferase domain. Positions 923 to 935 (HNQTEASPETSSG) are enriched in polar residues. Residues 923–952 (HNQTEASPETSSGGLPGSDGTGADGGAPRA) form a disordered region. Residues 936 to 952 (GLPGSDGTGADGGAPRA) show a composition bias toward gly residues.

This is an uncharacterized protein from Rhodobacter capsulatus (Rhodopseudomonas capsulata).